A 406-amino-acid chain; its full sequence is 1H-pyrrole-2-carbonyl-[peptidyl-carrier protein] brominase (406 aa).

The FAD site is built by Ala-17, Glu-36, Arg-42, His-44, Ile-45, Ser-48, Arg-101, Val-124, Asp-291, and Val-304.

This sequence belongs to the flavin-dependent halogenase family.

It carries out the reaction (1H-pyrrole-2-carbonyl)-[peptidyl-carrier protein] + 3 bromide + 3 FADH2 + 3 O2 = (3,4,5-tribromo-1H-pyrrole-2-carbonyl)-[peptidyl-carrier protein] + 3 FAD + 6 H2O. It catalyses the reaction (1H-pyrrole-2-carbonyl)-[peptidyl-carrier protein] + bromide + FADH2 + O2 = (5-bromo-1H-pyrrole-2-carbonyl)-[peptidyl-carrier protein] + FAD + 2 H2O. The enzyme catalyses (5-bromo-1H-pyrrole-2-carbonyl)-[peptidyl-carrier protein] + bromide + FADH2 + O2 = (4,5-dibromo-1H-pyrrole-2-carbonyl)-[peptidyl-carrier protein] + FAD + 2 H2O. The catalysed reaction is (4,5-dibromo-1H-pyrrole-2-carbonyl)-[peptidyl-carrier protein] + bromide + FADH2 + O2 = (3,4,5-tribromo-1H-pyrrole-2-carbonyl)-[peptidyl-carrier protein] + FAD + 2 H2O. Functionally, brominase involved in the biosynthesis of polybrominated aromatic organic compounds. Catalyzes three successive rounds of bromination of pyrrolyl-S-Bmp1 to produce mono-, di- and tribromopyrrolyl-S-Bmp1. This chain is 1H-pyrrole-2-carbonyl-[peptidyl-carrier protein] brominase, found in Pseudoalteromonas luteoviolacea (strain 2ta16).